We begin with the raw amino-acid sequence, 474 residues long: Homeobox protein PKNOX2 (474 aa).

Residues 1–42 (MMQHASPAPALTMMATQNVPPPPYQDSPQMTATAQPPSKAQA) are disordered. Polar residues predominate over residues 26 to 38 (DSPQMTATAQPPS). In terms of domain architecture, MEIS N-terminal spans 96–179 (GSECITSASF…MHSDNLLRND (84 aa)). The segment at residues 291–350 (KRGVLPKHATNIMRSWLFQHLMHPYPTEDEKRQIAAQTNLTLLQVNNWFINARRRILQPM) is a DNA-binding region (homeobox). 3 disordered regions span residues 351-371 (LDAS…QHRP), 385-405 (LQQQ…LDNL), and 423-474 (AAHD…DSLE). Basic residues predominate over residues 361–371 (KAKKIKSQHRP). Residues 429–456 (LDGTEEEDEDDMEEEEEEEEELEEEADE) show a composition bias toward acidic residues.

This sequence belongs to the TALE/MEIS homeobox family.

The protein localises to the nucleus. The chain is Homeobox protein PKNOX2 (Pknox2) from Mus musculus (Mouse).